We begin with the raw amino-acid sequence, 426 residues long: Serine--tRNA ligase (426 aa).

Thr-233 to Glu-235 lines the L-serine pocket. Position 264–266 (Arg-264–Glu-266) interacts with ATP. Residue Glu-287 participates in L-serine binding. Glu-351–Ser-354 lines the ATP pocket. Residue Ser-387 participates in L-serine binding.

The protein belongs to the class-II aminoacyl-tRNA synthetase family. Type-1 seryl-tRNA synthetase subfamily. Homodimer. The tRNA molecule binds across the dimer.

The protein resides in the cytoplasm. The enzyme catalyses tRNA(Ser) + L-serine + ATP = L-seryl-tRNA(Ser) + AMP + diphosphate + H(+). It carries out the reaction tRNA(Sec) + L-serine + ATP = L-seryl-tRNA(Sec) + AMP + diphosphate + H(+). Its pathway is aminoacyl-tRNA biosynthesis; selenocysteinyl-tRNA(Sec) biosynthesis; L-seryl-tRNA(Sec) from L-serine and tRNA(Sec): step 1/1. Its function is as follows. Catalyzes the attachment of serine to tRNA(Ser). Is also able to aminoacylate tRNA(Sec) with serine, to form the misacylated tRNA L-seryl-tRNA(Sec), which will be further converted into selenocysteinyl-tRNA(Sec). This chain is Serine--tRNA ligase, found in Clostridium botulinum (strain 657 / Type Ba4).